Reading from the N-terminus, the 275-residue chain is 3-methyl-2-oxobutanoate hydroxymethyltransferase (275 aa).

Aspartate 49 and aspartate 88 together coordinate Mg(2+). 3-methyl-2-oxobutanoate contacts are provided by residues 49–50 (DS), aspartate 88, and lysine 118. A Mg(2+)-binding site is contributed by glutamate 120. Catalysis depends on glutamate 187, which acts as the Proton acceptor.

The protein belongs to the PanB family. In terms of assembly, homodecamer; pentamer of dimers. The cofactor is Mg(2+).

The protein resides in the cytoplasm. It carries out the reaction 3-methyl-2-oxobutanoate + (6R)-5,10-methylene-5,6,7,8-tetrahydrofolate + H2O = 2-dehydropantoate + (6S)-5,6,7,8-tetrahydrofolate. It participates in cofactor biosynthesis; (R)-pantothenate biosynthesis; (R)-pantoate from 3-methyl-2-oxobutanoate: step 1/2. Catalyzes the reversible reaction in which hydroxymethyl group from 5,10-methylenetetrahydrofolate is transferred onto alpha-ketoisovalerate to form ketopantoate. This is 3-methyl-2-oxobutanoate hydroxymethyltransferase from Brucella melitensis biotype 1 (strain ATCC 23456 / CCUG 17765 / NCTC 10094 / 16M).